The following is a 120-amino-acid chain: Cytochrome c2 iso-1 (120 aa).

Pyrrolidone carboxylic acid is present on Gln1. 4 residues coordinate heme c: Cys15, Cys18, His19, and Met98.

Belongs to the cytochrome c family. Post-translationally, binds 1 heme c group covalently per subunit.

In terms of biological role, cytochrome c2 is found mainly in purple, non-sulfur, photosynthetic bacteria where it functions as the electron donor to the oxidized bacteriochlorophyll in the photophosphorylation pathway. However, it may also have a role in the respiratory chain and is found in some non-photosynthetic bacteria. In Rhodospirillum centenum (Rhodocista centenaria), this protein is Cytochrome c2 iso-1.